We begin with the raw amino-acid sequence, 1706 residues long: Probable ATP-dependent RNA helicase DDX60-like (1706 aa).

The disordered stretch occupies residues 545–580 (RPKEDSSGASGEILQNTKPHQITKKSKKKSFLKEDQ). Residues 551 to 564 (SGASGEILQNTKPH) are compositionally biased toward polar residues. Residues 565–574 (QITKKSKKKS) are compositionally biased toward basic residues. Residues 752–919 (LDVVDKNESA…WLQSVKQYWK (168 aa)) enclose the Helicase ATP-binding domain. 765-772 (APTSSGKT) lines the ATP pocket. The DEAH box motif lies at 869–872 (DEVH). Residues 1205-1354 (DVKALHTEIT…QFPLSITLVL (150 aa)) enclose the Helicase C-terminal domain.

It belongs to the helicase family.

The enzyme catalyses ATP + H2O = ADP + phosphate + H(+). This chain is Probable ATP-dependent RNA helicase DDX60-like, found in Homo sapiens (Human).